A 457-amino-acid chain; its full sequence is Cystathionine beta-lyase (457 aa).

The disordered stretch occupies residues methionine 1–arginine 41.

It belongs to the trans-sulfuration enzymes family. Pyridoxal 5'-phosphate serves as cofactor.

It is found in the cytoplasm. The protein localises to the nucleus. It carries out the reaction L,L-cystathionine + H2O = L-homocysteine + pyruvate + NH4(+). The catalysed reaction is an S-substituted L-cysteine + H2O = a thiol + pyruvate + NH4(+). The protein operates within amino-acid biosynthesis; L-methionine biosynthesis via de novo pathway; L-homocysteine from L-cystathionine: step 1/1. Its function is as follows. Involved in de novo synthesis of methionine. This is Cystathionine beta-lyase (met-2) from Neurospora crassa (strain ATCC 24698 / 74-OR23-1A / CBS 708.71 / DSM 1257 / FGSC 987).